The chain runs to 654 residues: Kelch-like protein 13 (654 aa).

One can recognise a BTB domain in the interval 91–160; the sequence is CDVTLMPGDT…IYTAKLSLNM (70 aa). One can recognise a BACK domain in the interval 195-296; the sequence is CVEVGRIANT…TPQELINYVQ (102 aa). 6 Kelch repeats span residues 340–388, 389–440, 441–487, 489–534, 536–586, and 587–635; these read RLVT…VIGN, FLYV…ALKG, FLYA…VYGG, MYIS…TVGD, LYVI…VFEN, and KIYV…TLTV.

Component of the BCR(KLHL9-KLHL13) E3 ubiquitin ligase complex, at least composed of CUL3, KLHL9, KLHL13 and RBX1. Interacts with AURKB.

It functions in the pathway protein modification; protein ubiquitination. Its function is as follows. Substrate-specific adapter of a BCR (BTB-CUL3-RBX1) E3 ubiquitin-protein ligase complex required for mitotic progression and cytokinesis. The BCR(KLHL9-KLHL13) E3 ubiquitin ligase complex mediates the ubiquitination of AURKB and controls the dynamic behavior of AURKB on mitotic chromosomes and thereby coordinates faithful mitotic progression and completion of cytokinesis. This Mus musculus (Mouse) protein is Kelch-like protein 13 (Klhl13).